The primary structure comprises 273 residues: Gap junction beta-5 protein (273 aa).

The Cytoplasmic segment spans residues 1–20 (MNWSIFEGLLSGVNKYSTAF). Residues 21 to 40 (GRIWLSLVFIFRVLVYLVTA) form a helical membrane-spanning segment. Residues 41 to 75 (ERVWSDDHKDFDCNTRQPGCSNVCFDEFFPVSHVR) are Extracellular-facing. Residues 76–98 (LWALQLILVTCPSLLVVMHVAYR) traverse the membrane as a helical segment. Residues 99-126 (EVQEKRHREAHGENSGRLYLNPGKKRGG) lie on the Cytoplasmic side of the membrane. The chain crosses the membrane as a helical span at residues 127–149 (LWWTYVCSLVFKASVDIAFLYVF). The Extracellular segment spans residues 150-187 (HSFYPKYILPPVVKCHADPCPNIVDCFISKPSEKNIFT). A helical membrane pass occupies residues 188 to 210 (LFMVATAAICILLNLVELIYLVS). Over 211-273 (KRCHECLAAR…PRDHVKKTIL (63 aa)) the chain is Cytoplasmic.

Belongs to the connexin family. Beta-type (group I) subfamily. A connexon is composed of a hexamer of connexins.

It localises to the cell membrane. The protein localises to the cell junction. The protein resides in the gap junction. In terms of biological role, one gap junction consists of a cluster of closely packed pairs of transmembrane channels, the connexons, through which materials of low MW diffuse from one cell to a neighboring cell. This Homo sapiens (Human) protein is Gap junction beta-5 protein (GJB5).